Here is a 1091-residue protein sequence, read N- to C-terminus: Multiple epidermal growth factor-like domains protein 11 (1091 aa).

A signal peptide spans 1–18 (MAPSAVGLLVFLLQAALA). Over 19-847 (LNPEDPNVCS…SPALGAERHS (829 aa)) the chain is Extracellular. In terms of domain architecture, EMI spans 23–100 (DPNVCSHWES…YYENGDFCIP (78 aa)). 14 cysteine pairs are disulfide-bonded: Cys-27-Cys-88, Cys-53-Cys-62, Cys-87-Cys-98, Cys-102-Cys-117, Cys-119-Cys-128, Cys-145-Cys-153, Cys-147-Cys-160, Cys-162-Cys-171, Cys-184-Cys-196, Cys-190-Cys-203, Cys-205-Cys-214, Cys-227-Cys-239, Cys-233-Cys-246, and Cys-248-Cys-257. 9 consecutive EGF-like domains span residues 94–129 (NGDFCIPLCTEECMHGRCVSPDTCHCEPGWGGPDCS), 142–172 (SNRCQCQNGALCNPITGACVCAPGFRGWRCE), 180–215 (HGKGCQLLCQCHHGASCDPRTGECLCAPGYTGVYCE), 223–258 (HGAHCELRCPCQNGGTCHHITGECACPPGWTGAVCA), 266–301 (FGQNCSQDCPCHHGGQCDHVTGQCHCTAGYMGDRCQ), 314–344 (SQRCDCHNGGQCSPATGACECEPGYKGPSCQ), 398–433 (YGNGCQLPCTCQNGADCHSITGSCTCAPGFMGEVCA), 441–476 (YGPNCSSVCSCSNGGTCSPVDGSCTCREGWQGLDCS), and 484–519 (WGLNCNETCICANGAACSPFDGSCACTPGWLGDSCE). N-linked (GlcNAc...) asparagine glycosylation is present at Asn-269. 15 disulfides stabilise this stretch: Cys-270–Cys-282, Cys-276–Cys-289, Cys-291–Cys-300, Cys-317–Cys-325, Cys-319–Cys-332, Cys-334–Cys-343, Cys-402–Cys-414, Cys-408–Cys-421, Cys-423–Cys-432, Cys-445–Cys-457, Cys-451–Cys-464, Cys-466–Cys-475, Cys-488–Cys-500, Cys-494–Cys-507, and Cys-509–Cys-518. Asn-530 carries N-linked (GlcNAc...) asparagine glycosylation. EGF-like domains follow at residues 570-605 (WGPNCSVSCSCENGGSCSPEDGSCECAPGFRGPLCQ), 613-650 (YGHGCAQPCPLCVHSRGPCHHISGICECLPGFSGALCN), 658-693 (FGQDCAQLCSCANNGTCSPIDGSCQCFPGWIGKDCS), 706-736 (FHTCSCHNGASCSAEDGACHCTPGWTGLFCT), 749-779 (GHICQCQNGASCDHITGKCTCRTGFSGRHCE), and 787-822 (FGYGCQQLCECMNNATCDHVTGTCYCSPGFKGIRCD). 18 disulfide bridges follow: Cys-574-Cys-586, Cys-580-Cys-593, Cys-595-Cys-604, Cys-617-Cys-631, Cys-621-Cys-638, Cys-640-Cys-649, Cys-662-Cys-674, Cys-668-Cys-681, Cys-683-Cys-692, Cys-709-Cys-717, Cys-711-Cys-724, Cys-726-Cys-735, Cys-752-Cys-760, Cys-754-Cys-767, Cys-769-Cys-778, Cys-791-Cys-803, Cys-797-Cys-810, and Cys-812-Cys-821. A helical transmembrane segment spans residues 848-868 (VGAVTGIVLLLFLVVVLLGLF). The Cytoplasmic portion of the chain corresponds to 869-1091 (AWRRRRQKEK…NIYEVGRCLT (223 aa)).

This sequence belongs to the MEGF family. Homomer. Does not interact with MEGF10.

It is found in the cell membrane. The protein resides in the basolateral cell membrane. Functionally, may regulate the mosaic spacing of specific neuron subtypes in the retina through homotypic retinal neuron repulsion. Mosaics provide a mechanism to distribute each cell type evenly across the retina, ensuring that all parts of the visual field have access to a full set of processing elements. The chain is Multiple epidermal growth factor-like domains protein 11 (Megf11) from Mus musculus (Mouse).